We begin with the raw amino-acid sequence, 418 residues long: Light-independent protochlorophyllide reductase subunit N (418 aa).

[4Fe-4S] cluster is bound by residues Cys-17, Cys-42, and Cys-103.

Belongs to the BchN/ChlN family. As to quaternary structure, protochlorophyllide reductase is composed of three subunits; ChlL, ChlN and ChlB. Forms a heterotetramer of two ChlB and two ChlN subunits. It depends on [4Fe-4S] cluster as a cofactor.

The enzyme catalyses chlorophyllide a + oxidized 2[4Fe-4S]-[ferredoxin] + 2 ADP + 2 phosphate = protochlorophyllide a + reduced 2[4Fe-4S]-[ferredoxin] + 2 ATP + 2 H2O. It participates in porphyrin-containing compound metabolism; chlorophyll biosynthesis (light-independent). Functionally, component of the dark-operative protochlorophyllide reductase (DPOR) that uses Mg-ATP and reduced ferredoxin to reduce ring D of protochlorophyllide (Pchlide) to form chlorophyllide a (Chlide). This reaction is light-independent. The NB-protein (ChlN-ChlB) is the catalytic component of the complex. This chain is Light-independent protochlorophyllide reductase subunit N, found in Prochlorococcus marinus (strain MIT 9312).